A 117-amino-acid chain; its full sequence is Ribonuclease P protein component (117 aa).

It belongs to the RnpA family. Consists of a catalytic RNA component (M1 or rnpB) and a protein subunit.

It catalyses the reaction Endonucleolytic cleavage of RNA, removing 5'-extranucleotides from tRNA precursor.. Its function is as follows. RNaseP catalyzes the removal of the 5'-leader sequence from pre-tRNA to produce the mature 5'-terminus. It can also cleave other RNA substrates such as 4.5S RNA. The protein component plays an auxiliary but essential role in vivo by binding to the 5'-leader sequence and broadening the substrate specificity of the ribozyme. The polypeptide is Ribonuclease P protein component (Aliivibrio fischeri (strain ATCC 700601 / ES114) (Vibrio fischeri)).